A 372-amino-acid polypeptide reads, in one-letter code: Adaptive-response sensory kinase SasA (372 aa).

One can recognise a Histidine kinase domain in the interval Met-147 to Gln-360. Residue His-150 is modified to Phosphohistidine; by autocatalysis.

As to quaternary structure, homooligomerizes. Interacts with KaiC. Participates in the KaiBC complex, whose core is composed of a KaiC homohexamer and 6 KaiB.

The enzyme catalyses ATP + protein L-histidine = ADP + protein N-phospho-L-histidine.. Its function is as follows. Member of the two-component regulatory system SasA/RpaA involved in genome-wide circadian gene expression. One of several clock output pathways. Participates in the Kai clock protein complex, the main circadian regulator in cyanobacteria, via its interaction with KaiC. KaiC enhances the autophosphorylation activity of SasA, which then transfers its phosphate group to RpaA to activate it. In addition to its output function, recruits fold-shifted KaiB (KaiB(fs)) to KaiC to cooperatively form the KaiB(6):KaiC(6) complex (independent of SasA kinase activity). Required for robustness of the circadian rhythm of gene expression and is involved in clock output, also required for adaptation to light/dark cycles. The chain is Adaptive-response sensory kinase SasA from Prochlorococcus marinus (strain MIT 9301).